A 452-amino-acid polypeptide reads, in one-letter code: MSETPAQCSIKQERISYTPPESPVPSYASSTPLHVPVPRALRMEEDSIRLPAHLRLQPMFWSRDDVAQWLKWAENEFSLRPIDSNTFEMNGKALLLLTKEDFRYRSPHSGDVLYELLQHILKQRKPRILFSPFFHPGNSIHTQQEVILHQNHEEDNGVQRTSRPSAENVHQNPPTIELLHRSRSPITTNHRPSPDPEQRPLRSPLDNMIRRLSPAERAQGPRLHQENNHQEPYPLSVSPMENNHCPPSSEPHPRPSSPRQEGTRVIQLMPSPIMHPLILNPRHSVDFKQPRLSEDGLHREGKPINLSHREDLAYMNHIMVSVSPPEEHAVPIGRIADCRLLWDYVYQLLSDSRYENFIRWEDKESKIFRIVDPNGLARLWGNHKNRTNMTYEKMSRALRHYYKLNIIRKEPGQRLLFRFMKTPDEIMSGRTDRLEHLESQELDEQIYQEDEC.

Lys-11 is modified (N6-acetyllysine; alternate). A Glycyl lysine isopeptide (Lys-Gly) (interchain with G-Cter in SUMO2); alternate cross-link involves residue Lys-11. The residue at position 18 (Thr-18) is a Phosphothreonine. At Ser-22 the chain carries Phosphoserine. Residues 40 to 124 (ALRMEEDSIR…ELLQHILKQR (85 aa)) form the PNT domain. The interval 154 to 262 (EDNGVQRTSR…PRPSSPRQEG (109 aa)) is disordered. Residues 158–174 (VQRTSRPSAENVHQNPP) are compositionally biased toward polar residues. Phosphoserine is present on residues Ser-213, Ser-238, and Ser-257. Lys-288 is covalently cross-linked (Glycyl lysine isopeptide (Lys-Gly) (interchain with G-Cter in SUMO2)). Lys-302 carries the post-translational modification N6-acetyllysine; alternate. Lys-302 is covalently cross-linked (Glycyl lysine isopeptide (Lys-Gly) (interchain with G-Cter in SUMO2); alternate). Residue Ser-323 is modified to Phosphoserine. Positions 339–420 (RLLWDYVYQL…PGQRLLFRFM (82 aa)) form a DNA-binding region, ETS. Residues Lys-403 and Lys-421 each participate in a glycyl lysine isopeptide (Lys-Gly) (interchain with G-Cter in SUMO2) cross-link.

It belongs to the ETS family. Can form homodimers or heterodimers with TEL2 or FLI1. Interacts with L3MBTL1 and HDAC9.

The protein resides in the nucleus. Transcriptional repressor; binds to the DNA sequence 5'-CCGGAAGT-3'. Plays a role in hematopoiesis and malignant transformation. The polypeptide is Transcription factor ETV6 (ETV6) (Bos taurus (Bovine)).